The sequence spans 372 residues: Alanine racemase (372 aa).

The active-site Proton acceptor; specific for D-alanine is K33. Residue K33 is modified to N6-(pyridoxal phosphate)lysine. R131 is a substrate binding site. Catalysis depends on Y261, which acts as the Proton acceptor; specific for L-alanine. M309 serves as a coordination point for substrate.

Belongs to the alanine racemase family. The cofactor is pyridoxal 5'-phosphate.

The enzyme catalyses L-alanine = D-alanine. It functions in the pathway amino-acid biosynthesis; D-alanine biosynthesis; D-alanine from L-alanine: step 1/1. Functionally, catalyzes the interconversion of L-alanine and D-alanine. May also act on other amino acids. In Salinispora tropica (strain ATCC BAA-916 / DSM 44818 / JCM 13857 / NBRC 105044 / CNB-440), this protein is Alanine racemase (alr).